The sequence spans 317 residues: E3 ubiquitin-protein ligase NRDP1 (317 aa).

The segment at 18–57 adopts an RING-type; degenerate zinc-finger fold; it reads CPICSGVLEEPVQAPHCEHAFCNACITQWFSQQQTCPVDR. The SIAH-type; degenerate zinc-finger motif lies at 78–138; sequence KLQIACDNAV…LPNHNCIKHL (61 aa).

In terms of assembly, interacts with USP8, ERBB3, PRKN and BIRC6. Interacts with CSF2RB, EPOR, IL3RA, MYD88 and TBK1. Interacts with Clec16a. Autoubiquitinated. Autoubiquitination leads to proteasomal degradation. Deubiquitinated by USP8 to get stabilized which induces apoptosis.

The enzyme catalyses S-ubiquitinyl-[E2 ubiquitin-conjugating enzyme]-L-cysteine + [acceptor protein]-L-lysine = [E2 ubiquitin-conjugating enzyme]-L-cysteine + N(6)-ubiquitinyl-[acceptor protein]-L-lysine.. The protein operates within protein modification; protein ubiquitination. Functionally, acts as E3 ubiquitin-protein ligase and regulates the degradation of target proteins. Polyubiquitinates MYD88. Negatively regulates MYD88-dependent production of pro-inflammatory cytokines. Can promote TRIF-dependent production of type I interferon and inhibits infection with vesicular stomatitis virus. Also promotes activation of TBK1 and IRF3. Involved in the ubiquitination of erythropoietin (EPO) and interleukin-3 (IL-3) receptors. Thus, through maintaining basal levels of cytokine receptors, RNF41 is involved in the control of hematopoietic progenitor cell differentiation into myeloerythroid lineages. Contributes to the maintenance of steady-state ERBB3 levels by mediating its growth factor-independent degradation. Involved in the degradation of the inhibitor of apoptosis BIRC6 and thus is an important regulator of cell death by promoting apoptosis. Also acts as a PRKN modifier that accelerates its degradation, resulting in a reduction of PRKN activity, influencing the balance of intracellular redox state. The RNF41-PRKN pathway regulates autophagosome-lysosome fusion during late mitophagy. Mitophagy is a selective form of autophagy necessary for mitochondrial quality control. The sequence is that of E3 ubiquitin-protein ligase NRDP1 (Rnf41) from Mus musculus (Mouse).